A 99-amino-acid polypeptide reads, in one-letter code: HssA/B-like protein 42 (99 aa).

The interval 1 to 29 (MTLFSSISSMSTSMSGSKSSISSFGSGTS) is disordered.

The protein belongs to the hssA/B family.

The protein is HssA/B-like protein 42 (hssl42) of Dictyostelium discoideum (Social amoeba).